The sequence spans 112 residues: Ribonuclease P protein component (112 aa).

The protein belongs to the RnpA family. In terms of assembly, consists of a catalytic RNA component (M1 or rnpB) and a protein subunit.

The catalysed reaction is Endonucleolytic cleavage of RNA, removing 5'-extranucleotides from tRNA precursor.. In terms of biological role, RNaseP catalyzes the removal of the 5'-leader sequence from pre-tRNA to produce the mature 5'-terminus. It can also cleave other RNA substrates such as 4.5S RNA. The protein component plays an auxiliary but essential role in vivo by binding to the 5'-leader sequence and broadening the substrate specificity of the ribozyme. This chain is Ribonuclease P protein component, found in Pelotomaculum thermopropionicum (strain DSM 13744 / JCM 10971 / SI).